A 228-amino-acid chain; its full sequence is RING1 and YY1-binding protein (228 aa).

Disordered regions lie at residues 1 to 21 (MTMG…PAAD), 65 to 156 (QVAQ…RSTA), and 172 to 228 (DFKE…DESF). Residues 21 to 50 (DEGFWDCSVCTFRNSAEAFKCSICDVRKGT) form a RanBP2-type zinc finger. The span at 76-98 (PKKEKKEKVEKQDKEKPEKDKEI) shows a compositional bias: basic and acidic residues. Lys77 participates in a covalent cross-link: Glycyl lysine isopeptide (Lys-Gly) (interchain with G-Cter in SUMO2). Phosphoserine is present on Ser99. Basic and acidic residues predominate over residues 113 to 122 (PKSDILKDPP). Ser123, Ser127, and Ser130 each carry phosphoserine. Residues 124–143 (EANSIQSANATTKTSETNHT) show a composition bias toward polar residues. An interaction with GABPB1 and FANK1 region spans residues 143 to 226 (TSRPRLKNVD…KGDMSAVNDE (84 aa)). Positions 179-204 (SSSTSSSTVTSSAGSEQQNQSSSGSE) are enriched in low complexity. Position 227 is a phosphoserine (Ser227).

Monomer. Component of repressive BCOR complex containing Polycomb group subcomplex at least composed of BCOR, PCGF1, RING1 and RNF2/RING2. Component of PCR1-like complexes. Interacts with PCGF1. Part of a PCR1-like complex that contains AUTS2, PCGF5, RNF2, CSNK2B and RYBP. Interacts with RNF2; the interaction is direct. Interacts with CBX2, YAF2, RING1 and RNF2. Interacts with ubiquitin and ubiquitinated proteins. Interacts with ubiquitinated histone H2A. Interacts with apoptin, DEDD, FADD, CASP8, CASP10, YY1 and GABPB1. Together with GABPB1 and YY1, it forms a ternary complex, probably being the bridge factor between these two transcription factors. Interacts with MDM2, and thereby inhibits ubiquitination of TP53. Identified in a ternary complex containing MDM2, TP53 and RYBP. Interacts with FANK1; may prevent the ubiquitin-mediated proteasomal degradation of FANK1. Interacts with IFT57. Post-translationally, monoubiquitinated. Down-regulated in breast cancer tissues and in several breast cancer cell lines (at protein level). Widely expressed with highest levels in lymphoid tissues and placenta.

It localises to the nucleus. Its subcellular location is the cytoplasm. The protein localises to the nucleoplasm. In terms of biological role, component of a Polycomb group (PcG) multiprotein PRC1-like complex, a complex class required to maintain the transcriptionally repressive state of many genes, including Hox genes, throughout development. PcG PRC1-like complex acts via chromatin remodeling and modification of histones; it mediates monoubiquitination of histone H2A 'Lys-119', rendering chromatin heritably changed in its expressibility. Component of a PRC1-like complex that mediates monoubiquitination of histone H2A 'Lys-119' on the X chromosome and is required for normal silencing of one copy of the X chromosome in XX females. May stimulate ubiquitination of histone H2A 'Lys-119' by recruiting the complex to target sites. Inhibits ubiquitination and subsequent degradation of TP53, and thereby plays a role in regulating transcription of TP53 target genes. May also regulate the ubiquitin-mediated proteasomal degradation of other proteins like FANK1 to regulate apoptosis. May be implicated in the regulation of the transcription as a repressor of the transcriptional activity of E4TF1. May bind to DNA. May play a role in the repression of tumor growth and metastasis in breast cancer by down-regulating SRRM3. This chain is RING1 and YY1-binding protein (RYBP), found in Homo sapiens (Human).